The chain runs to 327 residues: Methionine import ATP-binding protein MetN (327 aa).

The ABC transporter domain occupies 3–239 (VELKNIEKIY…PKHAVTKELI (237 aa)). 36–43 (GYSGAGKS) contributes to the ATP binding site.

The protein belongs to the ABC transporter superfamily. Methionine importer (TC 3.A.1.24) family. The complex is composed of two ATP-binding proteins (MetN), two transmembrane proteins (MetI) and a solute-binding protein (MetQ).

Its subcellular location is the cell inner membrane. It catalyses the reaction L-methionine(out) + ATP + H2O = L-methionine(in) + ADP + phosphate + H(+). The catalysed reaction is D-methionine(out) + ATP + H2O = D-methionine(in) + ADP + phosphate + H(+). Its function is as follows. Part of the ABC transporter complex MetNIQ involved in methionine import. Responsible for energy coupling to the transport system. This is Methionine import ATP-binding protein MetN from Helicobacter acinonychis (strain Sheeba).